Here is a 686-residue protein sequence, read N- to C-terminus: Asparagine-rich protein (686 aa).

The N-terminal stretch at 1–18 is a signal peptide; the sequence is MKGTSALLLIGFFHATIS. Disordered regions lie at residues 34–73, 125–148, and 201–236; these read KRGNLNTGGQITSNSAILGDVNAGSKLSEPPKRRNTDKTA, SLTSDTKTTTRTSQTSSTRASSSI, and ITRQKSENTQGNSIVRNGGTNSLNIPSSTRRSQPPN. Polar residues predominate over residues 37–49; it reads NLNTGGQITSNSA. The segment covering 62-73 has biased composition (basic and acidic residues); the sequence is EPPKRRNTDKTA.

Prismatic layer of shell (at protein level). Expressed primarily in the mantle with highest level in the mantle edge and lower level in the mantle pallium.

The protein localises to the secreted. The sequence is that of Asparagine-rich protein from Margaritifera margaritifera (Freshwater pearl mussel).